Reading from the N-terminus, the 138-residue chain is Putative pre-16S rRNA nuclease (138 aa).

The protein belongs to the YqgF nuclease family.

It is found in the cytoplasm. Could be a nuclease involved in processing of the 5'-end of pre-16S rRNA. The protein is Putative pre-16S rRNA nuclease of Listeria monocytogenes serovar 1/2a (strain ATCC BAA-679 / EGD-e).